A 421-amino-acid polypeptide reads, in one-letter code: G/T mismatch-specific thymine DNA glycosylase (421 aa).

The segment at 45 to 108 is disordered; that stretch reads PNMATVTEQQ…STKSKEKQEK (64 aa). The span at 77 to 89 shows a compositional bias: basic and acidic residues; it reads RAAEPQEPVEPKK. The span at 91 to 100 shows a compositional bias: basic residues; it reads ATSKKSGKST. Glycyl lysine isopeptide (Lys-Gly) (interchain with G-Cter in SUMO2) cross-links involve residues lysine 114 and lysine 259. Lysine 341 participates in a covalent cross-link: Glycyl lysine isopeptide (Lys-Gly) (interchain with G-Cter in SUMO); alternate. A Glycyl lysine isopeptide (Lys-Gly) (interchain with G-Cter in SUMO2); alternate cross-link involves residue lysine 341.

This sequence belongs to the uracil-DNA glycosylase (UDG) superfamily. TDG/mug family. In terms of assembly, homodimer. Interacts with AICDA and GADD45A. Post-translationally, sumoylation on Lys-341 by either SUMO1 or SUMO2 induces dissociation of the product DNA.

The protein resides in the nucleus. The catalysed reaction is Hydrolyzes mismatched double-stranded DNA and polynucleotides, releasing free thymine.. DNA glycosylase that plays a key role in active DNA demethylation: specifically recognizes and binds 5-formylcytosine (5fC) and 5-carboxylcytosine (5caC) in the context of CpG sites and mediates their excision through base-excision repair (BER) to install an unmethylated cytosine. Cannot remove 5-hydroxymethylcytosine (5hmC). According to an alternative model, involved in DNA demethylation by mediating DNA glycolase activity toward 5-hydroxymethyluracil (5hmU) produced by deamination of 5hmC. Also involved in DNA repair by acting as a thymine-DNA glycosylase that mediates correction of G/T mispairs to G/C pairs: in the DNA of higher eukaryotes, hydrolytic deamination of 5-methylcytosine to thymine leads to the formation of G/T mismatches. Its role in the repair of canonical base damage is however minor compared to its role in DNA demethylation. It is capable of hydrolyzing the carbon-nitrogen bond between the sugar-phosphate backbone of the DNA and a mispaired thymine. In addition to the G/T, it can remove thymine also from C/T and T/T mispairs in the order G/T &gt;&gt; C/T &gt; T/T. It has no detectable activity on apyrimidinic sites and does not catalyze the removal of thymine from A/T pairs or from single-stranded DNA. It can also remove uracil and 5-bromouracil from mispairs with guanine. This Mus musculus (Mouse) protein is G/T mismatch-specific thymine DNA glycosylase (Tdg).